A 475-amino-acid polypeptide reads, in one-letter code: Protein transport protein Sec61 subunit alpha (475 aa).

At 1–32 (MGFRFLDIVKPFTSLVPEVGQPDRKIPFREKV) the chain is on the cytoplasmic side. The chain crosses the membrane as a helical span at residues 33–53 (LWTAICLFIFLVCSQIPLYGI). Residues 54–75 (RSTDSSDPFYWAKVIMASNRGT) are Lumenal-facing. Residues 76–96 (LMELGISPIVTSGMVMQLLAG) form a helical membrane-spanning segment. The Cytoplasmic segment spans residues 97–118 (AKLIEIDQSVKADRDLFSAAQK). Residues 119 to 139 (LFGMLICVGQGVAYIWSGSYG) form a helical membrane-spanning segment. Over 140–145 (DPAVLG) the chain is Lumenal. Residues 146–166 (FGNCFLIVLQLFFAGIIVMLL) traverse the membrane as a helical segment. At 167–173 (DELLQKG) the chain is on the cytoplasmic side. Residues 174–194 (YGIGSGISLFIATNICETIVW) form a helical membrane-spanning segment. Over 195-241 (KTFSPTTVSVGKGTEFEGAVIALFHLLLTRNDKVRALKEAFYRQNLP) the chain is Lumenal. The helical transmembrane segment at 242–262 (NITNLLATVLIFMVVIYFQGF) threads the bilayer. Residues 263-289 (RVDLPVKSTRVSGQQGTYPIKLFYTSN) lie on the Cytoplasmic side of the membrane. The helical transmembrane segment at 290 to 310 (IPIILQSALVSNLYFISQLLY) threads the bilayer. Residues 311-353 (RRFPDNILVNLFGAWRTSEYSQQMIPVSGLTYYISSPNNMSAV) lie on the Lumenal side of the membrane. The chain crosses the membrane as a helical span at residues 354–374 (LADPFHALFYITFMLTSCALF). At 375–411 (SKVWIEVSGSSARDVAKQLKDQQMTMKGHRDTSVIKE) the chain is on the cytoplasmic side. A helical transmembrane segment spans residues 412 to 434 (LNRYIPTAAAFGGLCIGALTVVA). Residues 435-440 (DFMGAI) lie on the Lumenal side of the membrane. A helical membrane pass occupies residues 441-461 (GSGTGILLAVTIIYQYFETFV). Residues 462 to 475 (KEQQELSGGIGGLF) lie on the Cytoplasmic side of the membrane.

This sequence belongs to the SecY/SEC61-alpha family. As to quaternary structure, heterotrimeric complex composed of SEC61-alpha, SEC61-beta and SEC61-gamma.

The protein localises to the endoplasmic reticulum membrane. In terms of biological role, appears to play a crucial role in the insertion of secretory and membrane polypeptides into the ER. It is required for assembly of membrane and secretory proteins. Found to be tightly associated with membrane-bound ribosomes, either directly or through adaptor proteins. The protein is Protein transport protein Sec61 subunit alpha (sec61a) of Dictyostelium discoideum (Social amoeba).